A 221-amino-acid polypeptide reads, in one-letter code: Adenylate kinase (221 aa).

10–15 (GAGKGT) is a binding site for ATP. The tract at residues 30-59 (STGDMLRAAVKAGTPLGIEAKKVMDAGGLV) is NMP. AMP contacts are provided by residues Thr-31, Arg-36, 57 to 59 (GLV), 85 to 88 (GFPR), and Gln-92. The LID stretch occupies residues 122–159 (GRRVHVASGRTYHVKFNPPKADMVDDETGEALIQRDDD). ATP contacts are provided by residues Arg-123 and 132 to 133 (TY). Residues Arg-156 and Arg-167 each coordinate AMP. Gly-207 contacts ATP.

It belongs to the adenylate kinase family. As to quaternary structure, monomer.

It localises to the cytoplasm. It carries out the reaction AMP + ATP = 2 ADP. Its pathway is purine metabolism; AMP biosynthesis via salvage pathway; AMP from ADP: step 1/1. Functionally, catalyzes the reversible transfer of the terminal phosphate group between ATP and AMP. Plays an important role in cellular energy homeostasis and in adenine nucleotide metabolism. The chain is Adenylate kinase from Cupriavidus metallidurans (strain ATCC 43123 / DSM 2839 / NBRC 102507 / CH34) (Ralstonia metallidurans).